Reading from the N-terminus, the 142-residue chain is MKTFSAKPHEVKRDWFVVDASDKVLGRLAAEVARRLRGKHKAIYTPHVDTGDFIVVVNVEKLRVTGNKALDKKYYRHTGYPGGIYETNFTKLQQRFPERVLEKAVKGMLPKGPLGYAMLKKLKCYAGGEHPHSAQQPQVLEI.

The protein belongs to the universal ribosomal protein uL13 family. As to quaternary structure, part of the 50S ribosomal subunit.

Functionally, this protein is one of the early assembly proteins of the 50S ribosomal subunit, although it is not seen to bind rRNA by itself. It is important during the early stages of 50S assembly. The protein is Large ribosomal subunit protein uL13 of Aromatoleum aromaticum (strain DSM 19018 / LMG 30748 / EbN1) (Azoarcus sp. (strain EbN1)).